The sequence spans 227 residues: MIQEELVQIQELNEEIGRLLIEIARKSIKEEFKLDKLDLSKYDNPILDKKGLAFVTLEKIAYNTSSLRGCIGYVEAVAPLKQIAASAAKAAAFSDPRFNPLQEDELANIIIEVTVLTKPEEIKVKDRWDLPKIIKVGEDGLIVEKGILHSGLLLPQVPMEYCWDEETFLAETCIKASLEPDCWLDSSVRIKRFHGIIFKETKPNGSDIIVIKPSDIKCKLNELINNL.

The 195-residue stretch at 15–209 folds into the AMMECR1 domain; it reads EIGRLLIEIA…ETKPNGSDII (195 aa).

This chain is Protein SSO0193, found in Saccharolobus solfataricus (strain ATCC 35092 / DSM 1617 / JCM 11322 / P2) (Sulfolobus solfataricus).